The following is a 266-amino-acid chain: Hydroxyacylglutathione hydrolase (266 aa).

The Zn(2+) site is built by His-53, His-55, Asp-57, His-58, His-118, Asp-140, and His-178.

Belongs to the metallo-beta-lactamase superfamily. Glyoxalase II family. Monomer. Requires Zn(2+) as cofactor.

It carries out the reaction an S-(2-hydroxyacyl)glutathione + H2O = a 2-hydroxy carboxylate + glutathione + H(+). It participates in secondary metabolite metabolism; methylglyoxal degradation; (R)-lactate from methylglyoxal: step 2/2. In terms of biological role, thiolesterase that catalyzes the hydrolysis of S-D-lactoyl-glutathione to form glutathione and D-lactic acid. The protein is Hydroxyacylglutathione hydrolase of Cupriavidus metallidurans (strain ATCC 43123 / DSM 2839 / NBRC 102507 / CH34) (Ralstonia metallidurans).